A 578-amino-acid chain; its full sequence is Dapdiamide synthesis protein DdaD (578 aa).

One can recognise a Carrier domain in the interval 498-573 (ESISATEHQI…KMAAWLDASS (76 aa)). The residue at position 533 (S533) is an O-(pantetheine 4'-phosphoryl)serine.

The protein belongs to the ATP-dependent AMP-binding enzyme family. Requires pantetheine 4'-phosphate as cofactor.

It functions in the pathway antibiotic biosynthesis. Functionally, involved in dapdiamide antibiotics biosynthesis. Activates and sequesters N-beta-fumaramoyl-DAP as a covalently tethered thioester for subsequent oxidative modification of the fumaramoyl group. This is Dapdiamide synthesis protein DdaD from Enterobacter agglomerans (Erwinia herbicola).